The chain runs to 377 residues: Copper-containing nitrite reductase (377 aa).

Positions 1 to 35 (MTNTLQMTRRTMLTGAAVAGALTPILTSGGGNASP) form a signal peptide, tat-type signal. Plastocyanin-like domains lie at 99-194 (MTFD…IMVL) and 259-360 (GAVG…FKVT). Histidine 132, histidine 137, histidine 172, cysteine 173, histidine 182, methionine 187, and histidine 343 together coordinate Cu cation.

Belongs to the multicopper oxidase family. Homotrimer. Cu(2+) serves as cofactor. It depends on Cu(+) as a cofactor. FAD is required as a cofactor. Predicted to be exported by the Tat system. The position of the signal peptide cleavage has not been experimentally proven.

The protein resides in the periplasm. It carries out the reaction nitric oxide + Fe(III)-[cytochrome c] + H2O = Fe(II)-[cytochrome c] + nitrite + 2 H(+). It participates in nitrogen metabolism; nitrate reduction (denitrification); dinitrogen from nitrate: step 2/4. The chain is Copper-containing nitrite reductase (nirK) from Rhizobium sullae (Rhizobium hedysari).